The primary structure comprises 799 residues: Lon protease (799 aa).

The region spanning 7-200 is the Lon N-terminal domain; sequence LPVLPLRDIV…KVFALMEGEI (194 aa). Residue 352–359 participates in ATP binding; the sequence is GPPGVGKT. Positions 587-768 constitute a Lon proteolytic domain; the sequence is VDQVGIVTGL…DEVLKHALTG (182 aa). Active-site residues include Ser674 and Lys717. The interval 772–799 is disordered; the sequence is PVEWNEAEEPITTSAKKDDGDSDAMLTH.

This sequence belongs to the peptidase S16 family. As to quaternary structure, homohexamer. Organized in a ring with a central cavity.

The protein localises to the cytoplasm. The catalysed reaction is Hydrolysis of proteins in presence of ATP.. ATP-dependent serine protease that mediates the selective degradation of mutant and abnormal proteins as well as certain short-lived regulatory proteins. Required for cellular homeostasis and for survival from DNA damage and developmental changes induced by stress. Degrades polypeptides processively to yield small peptide fragments that are 5 to 10 amino acids long. Binds to DNA in a double-stranded, site-specific manner. CcrM is an important target of the Lon protease pathway in C.crescentus. In Caulobacter vibrioides (strain ATCC 19089 / CIP 103742 / CB 15) (Caulobacter crescentus), this protein is Lon protease.